Here is a 712-residue protein sequence, read N- to C-terminus: NADH-quinone oxidoreductase subunit L (712 aa).

17 helical membrane-spanning segments follow: residues isoleucine 4–threonine 24, alanine 28–leucine 48, leucine 79–tryptophan 99, alanine 113–valine 133, leucine 138–phenylalanine 158, phenylalanine 183–phenylalanine 203, phenylalanine 216–methionine 236, threonine 256–cysteine 276, methionine 290–glutamine 310, leucine 325–leucine 345, threonine 346–histidine 366, phenylalanine 385–isoleucine 405, isoleucine 421–alanine 441, alanine 475–tryptophan 495, leucine 588–aspartate 608, glycine 655–phenylalanine 675, and tyrosine 686–valine 706.

This sequence belongs to the complex I subunit 5 family. As to quaternary structure, NDH-1 is composed of 14 different subunits. Subunits NuoA, H, J, K, L, M, N constitute the membrane sector of the complex.

The protein localises to the cellular chromatophore membrane. The catalysed reaction is a quinone + NADH + 5 H(+)(in) = a quinol + NAD(+) + 4 H(+)(out). In terms of biological role, NDH-1 shuttles electrons from NADH, via FMN and iron-sulfur (Fe-S) centers, to quinones in the respiratory chain. The immediate electron acceptor for the enzyme in this species is believed to be ubiquinone. Couples the redox reaction to proton translocation (for every two electrons transferred, four hydrogen ions are translocated across the cytoplasmic membrane), and thus conserves the redox energy in a proton gradient. The sequence is that of NADH-quinone oxidoreductase subunit L (nuoL) from Rhodobacter capsulatus (Rhodopseudomonas capsulata).